The following is a 299-amino-acid chain: MAATGGGAEDESRSGRSSSEGECAVAPEPLAEAGGLFSFADLGAALGSGAGLPGRAVGRAQSPLRYLQVLWQQDVEPRDELRCKIPAGRLRRAARPHRRLGPTGKEVHALKRLRDSANANDIETVQQLLEDGADPCAADDKGRTALHFASCNGNDQIVQLLLDHGADPNQQDGLGNTPLHLAACTNHVPVITTLLRGGARVDALDRAGRTPLHLAKSKLNILQEGHSQCLEAVRLEVKQIIHMLREYLERLGRHEQRERLDDLCTRLQMTSTKEQVDEVTDLLASFTSLSLQMQSMEKR.

The tract at residues 1-27 is disordered; the sequence is MAATGGGAEDESRSGRSSSEGECAVAP. An N-acetylalanine modification is found at A2. At S62 the chain carries Phosphoserine. The Nuclear localization signal (NLS) motif lies at 98-116; that stretch reads RRLGPTGKEVHALKRLRDS. 4 ANK repeats span residues 108 to 137, 141 to 170, 174 to 203, and 207 to 239; these read HALK…DPCA, KGRT…DPNQ, LGNT…RVDA, and AGRT…EVKQ. Residues 140–240 are LYN-binding; it reads DKGRTALHFA…EAVRLEVKQI (101 aa). A Nuclear export signal (NES) motif is present at residues 282–292; sequence LLASFTSLSLQ.

Interacts (via ankyrin repeat region) with LYN (via SH3-domain) in an activation-independent status of LYN. Forms a multiprotein complex with LYN and HCLS1. Interacts with TSN2, VAV1, DBNL and LASP1.

Its subcellular location is the nucleus. It is found in the cytoplasm. The protein resides in the midbody. In terms of biological role, plays an important role in regulating intracellular signaling events associated with erythroid terminal differentiation. The polypeptide is Ankyrin repeat domain-containing protein 54 (Ankrd54) (Rattus norvegicus (Rat)).